Consider the following 132-residue polypeptide: Agouti-signaling protein (132 aa).

The first 22 residues, 1-22 (MDVTRLLLATLLVFLCFFTAYS), serve as a signal peptide directing secretion. N-linked (GlcNAc...) asparagine glycosylation is present at Asn-39. Residues 61-87 (QISRKEAEKKRSSKKEASMKKVARPRT) are disordered. The span at 63 to 79 (SRKEAEKKRSSKKEASM) shows a compositional bias: basic and acidic residues. 5 disulfides stabilise this stretch: Cys-93–Cys-108, Cys-100–Cys-114, Cys-107–Cys-125, Cys-111–Cys-132, and Cys-116–Cys-123. One can recognise an Agouti domain in the interval 93–132 (CVTTRDSCKPPAPACCDPCASCQCRFFRSACSCRVLSLNC).

The protein resides in the secreted. Functionally, involved in the regulation of melanogenesis. The binding of ASP to MC1R precludes alpha-MSH initiated signaling and thus blocks production of cAMP, leading to a down-regulation of eumelanogenesis (brown/black pigment) and thus increasing synthesis of pheomelanin (yellow/red pigment). The protein is Agouti-signaling protein (ASIP) of Macaca silenus (Lion-tailed macaque).